The primary structure comprises 1222 residues: ATP-dependent helicase/nuclease subunit A (1222 aa).

In terms of domain architecture, UvrD-like helicase ATP-binding spans 39–495 (QKRTAQQIEA…ILLKENFRSQ (457 aa)). Position 60–67 (60–67 (ASAGSGKT)) interacts with ATP. A UvrD-like helicase C-terminal domain is found at 524-810 (QLIAGSHAQT…NLMTIHKSKG (287 aa)).

It belongs to the helicase family. AddA subfamily. In terms of assembly, heterodimer of AddA and AddB/RexB. It depends on Mg(2+) as a cofactor.

The enzyme catalyses Couples ATP hydrolysis with the unwinding of duplex DNA by translocating in the 3'-5' direction.. It carries out the reaction ATP + H2O = ADP + phosphate + H(+). Functionally, the heterodimer acts as both an ATP-dependent DNA helicase and an ATP-dependent, dual-direction single-stranded exonuclease. Recognizes the chi site generating a DNA molecule suitable for the initiation of homologous recombination. The AddA nuclease domain is required for chi fragment generation; this subunit has the helicase and 3' -&gt; 5' nuclease activities. The polypeptide is ATP-dependent helicase/nuclease subunit A (Streptococcus pyogenes serotype M28 (strain MGAS6180)).